Consider the following 347-residue polypeptide: Spermidine/putrescine import ATP-binding protein PotA (347 aa).

The region spanning 6 to 236 (IEIKNVYKEF…PKNAFVAKFI (231 aa)) is the ABC transporter domain. 38-45 (GPSGCGKT) is an ATP binding site.

The protein belongs to the ABC transporter superfamily. Spermidine/putrescine importer (TC 3.A.1.11.1) family. As to quaternary structure, the complex is composed of two ATP-binding proteins (PotA), two transmembrane proteins (PotB and PotC) and a solute-binding protein (PotD).

The protein resides in the cell membrane. The catalysed reaction is ATP + H2O + polyamine-[polyamine-binding protein]Side 1 = ADP + phosphate + polyamineSide 2 + [polyamine-binding protein]Side 1.. Functionally, part of the ABC transporter complex PotABCD involved in spermidine/putrescine import. Responsible for energy coupling to the transport system. The protein is Spermidine/putrescine import ATP-binding protein PotA of Clostridium novyi (strain NT).